Here is a 942-residue protein sequence, read N- to C-terminus: UvrABC system protein A (942 aa).

Gly31 to Ser38 contributes to the ATP binding site. The segment at Cys253 to Cys280 adopts a C4-type zinc-finger fold. 2 consecutive ABC transporter domains span residues Trp310–Ile586 and Tyr606–Thr936. Residue Gly639 to Ser646 participates in ATP binding. Residues Cys739–Cys765 form a C4-type zinc finger.

It belongs to the ABC transporter superfamily. UvrA family. As to quaternary structure, forms a heterotetramer with UvrB during the search for lesions.

Its subcellular location is the cytoplasm. The UvrABC repair system catalyzes the recognition and processing of DNA lesions. UvrA is an ATPase and a DNA-binding protein. A damage recognition complex composed of 2 UvrA and 2 UvrB subunits scans DNA for abnormalities. When the presence of a lesion has been verified by UvrB, the UvrA molecules dissociate. The chain is UvrABC system protein A from Haemophilus ducreyi (strain 35000HP / ATCC 700724).